The following is a 419-amino-acid chain: Histidine--tRNA ligase (419 aa).

The protein belongs to the class-II aminoacyl-tRNA synthetase family. As to quaternary structure, homodimer.

It localises to the cytoplasm. The enzyme catalyses tRNA(His) + L-histidine + ATP = L-histidyl-tRNA(His) + AMP + diphosphate + H(+). This is Histidine--tRNA ligase from Caldicellulosiruptor saccharolyticus (strain ATCC 43494 / DSM 8903 / Tp8T 6331).